The following is a 204-amino-acid chain: Large ribosomal subunit protein uL13 (204 aa).

The protein belongs to the universal ribosomal protein uL13 family.

This Spodoptera frugiperda (Fall armyworm) protein is Large ribosomal subunit protein uL13 (RpL13A).